A 912-amino-acid polypeptide reads, in one-letter code: Coatomer subunit beta (912 aa).

HEAT repeat units follow at residues 59–96 (PIPQLLMPIILYVMPSNDHTIKKLLLIYWEVIEKTHLG), 100–135 (SEMILVCNSLLNDLNHPNEFVRGSTLRFLCKLREAE), 136–172 (VLEPLVPSVRSNLENRHAYCRRNAVLAIYNIYSHFDY), 244–281 (SERSKYIKCIFTLLNSSSPAVKYESAGTLLSLSSAPTA), 300–337 (NVKMIVLDKLIEIKKNHSKIMEELVMDILRALSSPNID), 339–375 (CKKVLNIVLDSVTPKNIDEIILFLKKEINKTQSKEFD), 397–434 (EVLGNVVPLLMEYLGDSYLPSAVDVVIFLREVVETYPS), 441–479 (KKLIENLSSIKVSKVYRVAVWVIAEYVTCLEDLQYAMTS), 550–575 (LKAQVMMIISVLINLSKASQVSTSKS), and 576–612 (AYERMLSCIQVLIDSNATIKKIWLQDCRDSFANYLKY).

In terms of assembly, oligomeric complex that consists of at least the alpha, beta, beta', gamma, delta, epsilon and zeta subunits.

The protein localises to the cytoplasm. The protein resides in the golgi apparatus membrane. It localises to the cytoplasmic vesicle. It is found in the COPI-coated vesicle membrane. Functionally, the coatomer is a cytosolic protein complex that binds to dilysine motifs and reversibly associates with Golgi non-clathrin-coated vesicles, which further mediate biosynthetic protein transport from the ER, via the Golgi up to the trans Golgi network. Coatomer complex is required for budding from Golgi membranes, and is essential for the retrograde Golgi-to-ER transport of dilysine-tagged proteins. The protein is Coatomer subunit beta (copb) of Dictyostelium discoideum (Social amoeba).